A 604-amino-acid chain; its full sequence is uncharacterized protein (604 aa).

Belongs to the glycosyltransferase 2 family.

This is an uncharacterized protein from Rickettsia conorii (strain ATCC VR-613 / Malish 7).